The sequence spans 283 residues: Thymidylate synthase (283 aa).

R22 is a binding site for dUMP. The active-site Nucleophile is C160. Residues 180-183, N191, and 221-223 each bind dUMP; these read RSCD and HIY. D183 serves as a coordination point for (6R)-5,10-methylene-5,6,7,8-tetrahydrofolate. S282 provides a ligand contact to (6R)-5,10-methylene-5,6,7,8-tetrahydrofolate.

The protein belongs to the thymidylate synthase family. Bacterial-type ThyA subfamily. In terms of assembly, homodimer.

The protein resides in the cytoplasm. The catalysed reaction is dUMP + (6R)-5,10-methylene-5,6,7,8-tetrahydrofolate = 7,8-dihydrofolate + dTMP. Its pathway is pyrimidine metabolism; dTTP biosynthesis. Functionally, catalyzes the reductive methylation of 2'-deoxyuridine-5'-monophosphate (dUMP) to 2'-deoxythymidine-5'-monophosphate (dTMP) while utilizing 5,10-methylenetetrahydrofolate (mTHF) as the methyl donor and reductant in the reaction, yielding dihydrofolate (DHF) as a by-product. This enzymatic reaction provides an intracellular de novo source of dTMP, an essential precursor for DNA biosynthesis. The chain is Thymidylate synthase from Vibrio cholerae serotype O1 (strain ATCC 39541 / Classical Ogawa 395 / O395).